Reading from the N-terminus, the 322-residue chain is N-acetyl-gamma-glutamyl-phosphate reductase (322 aa).

Cys132 is a catalytic residue.

It belongs to the NAGSA dehydrogenase family. Type 1 subfamily.

The protein localises to the cytoplasm. The catalysed reaction is N-acetyl-L-glutamate 5-semialdehyde + phosphate + NADP(+) = N-acetyl-L-glutamyl 5-phosphate + NADPH + H(+). Its pathway is amino-acid biosynthesis; L-arginine biosynthesis; N(2)-acetyl-L-ornithine from L-glutamate: step 3/4. Functionally, catalyzes the NADPH-dependent reduction of N-acetyl-5-glutamyl phosphate to yield N-acetyl-L-glutamate 5-semialdehyde. This is N-acetyl-gamma-glutamyl-phosphate reductase from Bacteroides fragilis (strain ATCC 25285 / DSM 2151 / CCUG 4856 / JCM 11019 / LMG 10263 / NCTC 9343 / Onslow / VPI 2553 / EN-2).